Consider the following 232-residue polypeptide: Chaperone protein LpfB (232 aa).

Positions 1 to 23 (MNRSRLISCTALVLALIAQNSFA) are cleaved as a signal peptide.

The protein belongs to the periplasmic pilus chaperone family.

The protein localises to the periplasm. Required for the biogenesis of long polar fimbria; binds and interact with LpfA. The sequence is that of Chaperone protein LpfB (lpfB) from Salmonella typhimurium (strain LT2 / SGSC1412 / ATCC 700720).